We begin with the raw amino-acid sequence, 185 residues long: Elongation factor P (185 aa).

This sequence belongs to the elongation factor P family.

The protein localises to the cytoplasm. It functions in the pathway protein biosynthesis; polypeptide chain elongation. In terms of biological role, involved in peptide bond synthesis. Stimulates efficient translation and peptide-bond synthesis on native or reconstituted 70S ribosomes in vitro. Probably functions indirectly by altering the affinity of the ribosome for aminoacyl-tRNA, thus increasing their reactivity as acceptors for peptidyl transferase. This chain is Elongation factor P, found in Desulfovibrio desulfuricans (strain ATCC 27774 / DSM 6949 / MB).